Reading from the N-terminus, the 532-residue chain is Fe-S cluster assembly factor HCF101, chloroplastic (532 aa).

Residues 1–61 (MPLLHPQSLR…RVSQNLSVAK (61 aa)) constitute a chloroplast transit peptide. Ala62 is modified (N-acetylalanine). 184–191 (CKGGVGKS) contacts ATP.

It belongs to the Mrp/NBP35 ATP-binding proteins family. Requires [4Fe-4S] cluster as cofactor. As to expression, expressed in aerial tissues exposed to light. Very low expression in roots.

The protein resides in the plastid. Its subcellular location is the chloroplast stroma. In terms of biological role, required for photosystem I (PSI) biosynthesis and assembly. May serve as a chloroplast scaffold protein that specifically assembles iron-sulfur (4Fe-4S) clusters and transfers them to the chloroplast PSI and ferredoxin-thioredoxin (FTR) complexes. Can assemble a 4Fe-4S cluster and transfer it to apoproteins in yeast cells. Probably not required for assembly or stability of plastidic 2Fe-2S clusters. This is Fe-S cluster assembly factor HCF101, chloroplastic (HCF101) from Arabidopsis thaliana (Mouse-ear cress).